A 377-amino-acid polypeptide reads, in one-letter code: Compound eye opsin BCRH1 (377 aa).

Over Met-1–Trp-53 the chain is Extracellular. An N-linked (GlcNAc...) asparagine glycan is attached at Asn-3. The chain crosses the membrane as a helical span at residues His-54–Leu-78. Residues Tyr-79–Asn-90 are Cytoplasmic-facing. The helical transmembrane segment at Met-91 to Cys-115 threads the bilayer. The Extracellular portion of the chain corresponds to Phe-116 to Tyr-131. A disulfide bridge links Cys-128 with Cys-205. A helical membrane pass occupies residues Ala-132–Phe-151. The Cytoplasmic segment spans residues Asp-152 to Lys-170. The helical transmembrane segment at Ala-171–Gly-194 threads the bilayer. Residues Ser-195–Thr-218 are Extracellular-facing. The chain crosses the membrane as a helical span at residues Tyr-219–Ile-246. Residues Phe-247–Lys-281 lie on the Cytoplasmic side of the membrane. A helical transmembrane segment spans residues Thr-282 to Leu-305. At Leu-306 to Thr-313 the chain is on the extracellular side. The helical transmembrane segment at Pro-314–Ser-338 threads the bilayer. At Lys-325 the chain carries N6-(retinylidene)lysine. Topologically, residues His-339 to Ser-377 are cytoplasmic.

Belongs to the G-protein coupled receptor 1 family. Opsin subfamily. In terms of processing, phosphorylated on some or all of the serine and threonine residues present in the C-terminal region. In terms of tissue distribution, expressed in all of the seven retinular cells (R1-R7) forming the main rhabdom in each ommatidium.

Its subcellular location is the membrane. Visual pigments are the light-absorbing molecules that mediate vision. They consist of an apoprotein, opsin, covalently linked to cis-retinal. This opsin produces visual pigments with maximal absorption in the blue-green region of the spectrum. This is Compound eye opsin BCRH1 from Hemigrapsus sanguineus (Asian shore crab).